The chain runs to 147 residues: Putative pre-16S rRNA nuclease (147 aa).

This sequence belongs to the YqgF nuclease family.

The protein localises to the cytoplasm. In terms of biological role, could be a nuclease involved in processing of the 5'-end of pre-16S rRNA. This is Putative pre-16S rRNA nuclease from Polynucleobacter necessarius subsp. necessarius (strain STIR1).